The following is a 162-amino-acid chain: uncharacterized protein (162 aa).

Residues 7–27 (LGGVMLFAIVSLMVCGCMVVF) traverse the membrane as a helical segment.

The protein localises to the membrane. This is an uncharacterized protein from Methanocaldococcus jannaschii (strain ATCC 43067 / DSM 2661 / JAL-1 / JCM 10045 / NBRC 100440) (Methanococcus jannaschii).